The sequence spans 176 residues: Crossover junction endodeoxyribonuclease RuvC (176 aa).

Active-site residues include aspartate 8, glutamate 69, and aspartate 141. 3 residues coordinate Mg(2+): aspartate 8, glutamate 69, and aspartate 141.

Belongs to the RuvC family. Homodimer which binds Holliday junction (HJ) DNA. The HJ becomes 2-fold symmetrical on binding to RuvC with unstacked arms; it has a different conformation from HJ DNA in complex with RuvA. In the full resolvosome a probable DNA-RuvA(4)-RuvB(12)-RuvC(2) complex forms which resolves the HJ. Mg(2+) serves as cofactor.

The protein resides in the cytoplasm. The catalysed reaction is Endonucleolytic cleavage at a junction such as a reciprocal single-stranded crossover between two homologous DNA duplexes (Holliday junction).. The RuvA-RuvB-RuvC complex processes Holliday junction (HJ) DNA during genetic recombination and DNA repair. Endonuclease that resolves HJ intermediates. Cleaves cruciform DNA by making single-stranded nicks across the HJ at symmetrical positions within the homologous arms, yielding a 5'-phosphate and a 3'-hydroxyl group; requires a central core of homology in the junction. The consensus cleavage sequence is 5'-(A/T)TT(C/G)-3'. Cleavage occurs on the 3'-side of the TT dinucleotide at the point of strand exchange. HJ branch migration catalyzed by RuvA-RuvB allows RuvC to scan DNA until it finds its consensus sequence, where it cleaves and resolves the cruciform DNA. This Pseudomonas syringae pv. tomato (strain ATCC BAA-871 / DC3000) protein is Crossover junction endodeoxyribonuclease RuvC.